A 392-amino-acid chain; its full sequence is Cyclic di-GMP phosphodiesterase RocR (392 aa).

Positions N5–N126 constitute a Response regulatory domain. D56 is modified (4-aspartylphosphate). One can recognise an EAL domain in the interval E140 to S392. E175, N233, E265, and D295 together coordinate Mg(2+). The active-site Proton acceptor is the E352.

In terms of assembly, homotetramer. Exhibits a highly unusual tetrameric structure arranged around a single dyad, with the four subunits adopting two distinctly different conformations, with only two active sites accessible for substrate binding. Interacts with RocS1. Requires Mg(2+) as cofactor.

It carries out the reaction 3',3'-c-di-GMP + H2O = 5'-phosphoguanylyl(3'-&gt;5')guanosine + H(+). Its activity is regulated as follows. Phosphorylation of Asp-56 probably induces local conformational changes in the response regulatory domain. These structural changes are transmitted to the adjacent EAL domain, then the signal is further transmitted down to the active site. The phosphodiesterase activity is inhibited by Ca(2+) and Zn(2+). Phosphodiesterase activity is inhibited by a benzoisothiazolinone derivative that specifically inhibited RocR, but not some other phosphodiesterases. In terms of biological role, phosphodiesterase (PDE) that catalyzes the hydrolysis of cyclic diguanylate (c-di-GMP) to 5'-pGpG. Cannot use cyclic AMP or cyclic GMP. Part of the RocSAR two-component regulatory signaling system (also known as the SadARS system), which regulates biofilm maturation, type III secretion and expression of the cup fimbrial-gene cluster. Negatively regulates the expression of cup genes by antagonizing the activity of RocA1. The sequence is that of Cyclic di-GMP phosphodiesterase RocR from Pseudomonas aeruginosa (strain ATCC 15692 / DSM 22644 / CIP 104116 / JCM 14847 / LMG 12228 / 1C / PRS 101 / PAO1).